The following is a 475-amino-acid chain: Ubiquilin-like protein (475 aa).

Residues 31–105 (TRVIVKTAGN…IYLVIKSKQG (75 aa)) form the Ubiquitin-like domain. Disordered stretches follow at residues 113–138 (FRDL…VHQP) and 305–325 (QVQS…QLTQ). Over residues 129 to 138 (KGNSSRVHQP) the composition is skewed to polar residues.

This chain is Ubiquilin-like protein (UBQLNL), found in Homo sapiens (Human).